The sequence spans 476 residues: Aspartyl/glutamyl-tRNA(Asn/Gln) amidotransferase subunit B (476 aa).

The protein belongs to the GatB/GatE family. GatB subfamily. As to quaternary structure, heterotrimer of A, B and C subunits.

It catalyses the reaction L-glutamyl-tRNA(Gln) + L-glutamine + ATP + H2O = L-glutaminyl-tRNA(Gln) + L-glutamate + ADP + phosphate + H(+). It carries out the reaction L-aspartyl-tRNA(Asn) + L-glutamine + ATP + H2O = L-asparaginyl-tRNA(Asn) + L-glutamate + ADP + phosphate + 2 H(+). Its function is as follows. Allows the formation of correctly charged Asn-tRNA(Asn) or Gln-tRNA(Gln) through the transamidation of misacylated Asp-tRNA(Asn) or Glu-tRNA(Gln) in organisms which lack either or both of asparaginyl-tRNA or glutaminyl-tRNA synthetases. The reaction takes place in the presence of glutamine and ATP through an activated phospho-Asp-tRNA(Asn) or phospho-Glu-tRNA(Gln). The polypeptide is Aspartyl/glutamyl-tRNA(Asn/Gln) amidotransferase subunit B (Nitratidesulfovibrio vulgaris (strain ATCC 29579 / DSM 644 / CCUG 34227 / NCIMB 8303 / VKM B-1760 / Hildenborough) (Desulfovibrio vulgaris)).